We begin with the raw amino-acid sequence, 311 residues long: Protein nfe2 (311 aa).

Functionally, responsible for the nodulation efficiency and competitive ability of strain GR4 on alfalfa roots. The polypeptide is Protein nfe2 (nfe2) (Rhizobium meliloti (Ensifer meliloti)).